The chain runs to 283 residues: GTPase Era (283 aa).

One can recognise an Era-type G domain in the interval 7–175 (YCGHVIIVGK…KNIIKSYLPE (169 aa)). The interval 15–22 (GKANVGKS) is G1. A GTP-binding site is contributed by 15–22 (GKANVGKS). A G2 region spans residues 41–45 (NTTQS). Residues 62-65 (DTPG) are G3. GTP contacts are provided by residues 62-66 (DTPGV) and 124-127 (NKID). The G4 stretch occupies residues 124–127 (NKID). A G5 region spans residues 154–156 (ISA). Residues 198–283 (IREQLILFLG…HLVLWVKDKN (86 aa)) enclose the KH type-2 domain.

This sequence belongs to the TRAFAC class TrmE-Era-EngA-EngB-Septin-like GTPase superfamily. Era GTPase family. As to quaternary structure, monomer.

It localises to the cytoplasm. It is found in the cell membrane. Functionally, an essential GTPase that binds both GDP and GTP, with rapid nucleotide exchange. Plays a role in 16S rRNA processing and 30S ribosomal subunit biogenesis and possibly also in cell cycle regulation and energy metabolism. In Buchnera aphidicola subsp. Acyrthosiphon pisum (strain Tuc7), this protein is GTPase Era.